The sequence spans 150 residues: Viral late gene transcription factor 2 (150 aa).

It belongs to the orthopoxvirus VLTF-2/OPG126 family. As to quaternary structure, interacts with itself. Interacts with the late transcription factors VLTF-1/OPG093.

Functionally, acts with RNA polymerase to initiate transcription from late gene promoters. The sequence is that of Viral late gene transcription factor 2 (OPG126) from Vaccinia virus (strain Western Reserve) (VACV).